A 522-amino-acid polypeptide reads, in one-letter code: Tetratricopeptide repeat and J domain-containing co-chaperone DNJ1 (522 aa).

Residues 1–22 form the signal peptide; the sequence is MKGFLLVALPVLFLSLSTQVFG. 7 TPR repeats span residues 29-62, 63-96, 97-130, 142-175, 210-243, 256-289, and 356-389; these read AAQI…DPTG, YANY…NPGF, VQAH…KSDS, GEAA…GPNS, TYLP…DPDS, LEKD…LVRF, and VDSW…SGRS. The J domain maps to 410–471; that stretch reads DYYKVLGVPR…ELRQRYDNGD (62 aa). Positions 465 to 494 are disordered; that stretch reads QRYDNGDDPNDPTGGQQHNPFAHHGGGMPF.

The protein localises to the endoplasmic reticulum lumen. Endoplasmic reticulum co-chaperone crucial for survival and virulence factor production at elevated temperatures representative of febrile patients during infection. Contributes to virulence in a mouse model of cryptococcosis. With chaperone CNE1, coordinately maintains ER homeostasis and contributes to maintenance of cell wall architecture. The polypeptide is Tetratricopeptide repeat and J domain-containing co-chaperone DNJ1 (Cryptococcus neoformans var. grubii serotype A (strain H99 / ATCC 208821 / CBS 10515 / FGSC 9487) (Filobasidiella neoformans var. grubii)).